A 268-amino-acid polypeptide reads, in one-letter code: 26S proteasome regulatory subunit RPN10 (268 aa).

The VWFA domain occupies 5–190 (ATVLVIDNSE…LYENIASSPI (186 aa)). The 20-residue stretch at 223–242 (SMDPELAMALRLSMEEEQQR) folds into the UIM domain. Residues 226–268 (PELAMALRLSMEEEQQRQERLRQQQQQQDQPEQSEQPEQHQDK) form a disordered region. Residues 235–247 (SMEEEQQRQERLR) are compositionally biased toward basic and acidic residues. Residues 248-261 (QQQQQQDQPEQSEQ) are compositionally biased toward low complexity.

It belongs to the proteasome subunit S5A family. In terms of assembly, the 26S proteasome is composed of a core protease, known as the 20S proteasome, capped at one or both ends by the 19S regulatory complex (RC). The RC is composed of at least 18 different subunits in two subcomplexes, the base and the lid, which form the portions proximal and distal to the 20S proteolytic core, respectively. Ubiquitinated, leading to its degradation. Ubiquitination is promoted by HUL5.

Its function is as follows. Multiubiquitin binding protein. The sequence is that of 26S proteasome regulatory subunit RPN10 (RPN10) from Saccharomyces cerevisiae (strain ATCC 204508 / S288c) (Baker's yeast).